Here is an 829-residue protein sequence, read N- to C-terminus: Receptor-type tyrosine-protein phosphatase alpha (829 aa).

A signal peptide spans 1-19 (MDSWFILVLFGSGLIHVSA). Topologically, residues 20-142 (NNATTVSPSL…ETFPPADETP (123 aa)) are extracellular. 8 N-linked (GlcNAc...) asparagine glycosylation sites follow: N21, N47, N51, N68, N80, N86, N104, and N124. A disordered region spans residues 79-106 (VNSSHSDNGTRRAASTESGGTTISPNGS). The helical transmembrane segment at 143 to 166 (IIAVMVALSSLLVIVFIIIVLYML) threads the bilayer. Residues 167-829 (RFKKYKQAGS…DAFSDYANFK (663 aa)) lie on the Cytoplasmic side of the membrane. 2 positions are modified to phosphoserine: S202 and S204. 2 Tyrosine-protein phosphatase domains span residues 232-528 (FREE…LLEH) and 560-818 (LEEE…VQEY). Residues D437, 469-475 (CSAGVGR), and Q513 contribute to the substrate site. C469 acts as the Phosphocysteine intermediate in catalysis. Residue C759 is the Phosphocysteine intermediate of the active site. Y825 is modified (phosphotyrosine).

Belongs to the protein-tyrosine phosphatase family. Receptor class 4 subfamily. In terms of assembly, part of a complex comprised of PTPRA, BCAR1, BCAR3 (via SH2 domain), and SRC. Within the complex, interacts (when phosphorylated on Tyr-825) with BCAR3 (via SH2 domain). Interacts with GRB2. Integrin binding to extracellular matrix induces phosphorylation at Tyr-825 which induces PTPRA localization and recruitment of BCAR3, BCAR1 and CRK to focal adhesions. Widely expressed. Highest expression in brain and kidney.

The protein localises to the cell membrane. Its subcellular location is the cell junction. It is found in the focal adhesion. The enzyme catalyses O-phospho-L-tyrosyl-[protein] + H2O = L-tyrosyl-[protein] + phosphate. Its function is as follows. Tyrosine protein phosphatase which is involved in integrin-mediated focal adhesion formation. Following integrin engagement, specifically recruits BCAR3, BCAR1 and CRK to focal adhesions thereby promoting SRC-mediated phosphorylation of BRAC1 and the subsequent activation of PAK and small GTPase RAC1 and CDC42. This chain is Receptor-type tyrosine-protein phosphatase alpha (Ptpra), found in Mus musculus (Mouse).